Reading from the N-terminus, the 460-residue chain is Telomere-binding protein homolog (460 aa).

The protein belongs to the telombin family.

It is found in the nucleus. The protein resides in the chromosome. The protein localises to the telomere. May bind telomeric T4G4 sequences. This is Telomere-binding protein homolog from Euplotes crassus.